The chain runs to 1130 residues: MHC class II transactivator (1130 aa).

Positions 94-132 (AYANIAELDQYVFQDSQLEGLSKDIFKHIGPDEVIGESM) are required for acetyltransferase activity. The tract at residues 269–303 (PSGFTVHGLPTSPDRPGSTSPFAPSATDLPSMPEP) is disordered. The NACHT domain occupies 414–724 (RVIAVLGKAG…CFLGALWLAL (311 aa)). 420–427 (GKAGQGKS) provides a ligand contact to GTP. 4 LRR repeats span residues 985–1008 (SLQHLDLDALSENKIGDEGVSQLS), 1016–1037 (SLETLNLSQNNITDLGAYKLAE), 1045–1066 (SLLRLSLYNNCICDVGAESLAR), and 1073–1093 (SLRVMDVQYNKFTAAGAQQLA).

Interacts with ZXDA and ZXDC. Interacts with PML (isoform PML-2). Interacts with TAF7; interaction inhibits CIITA acetyltransferase activity, thereby repressing transcription. Autophosphorylated, affecting interaction with TAF7.

It localises to the nucleus. The protein localises to the PML body. The catalysed reaction is L-seryl-[protein] + ATP = O-phospho-L-seryl-[protein] + ADP + H(+). It catalyses the reaction L-threonyl-[protein] + ATP = O-phospho-L-threonyl-[protein] + ADP + H(+). Functionally, essential for transcriptional activity of the HLA class II promoter; activation is via the proximal promoter. Does not bind DNA. May act in a coactivator-like fashion through protein-protein interactions by contacting factors binding to the proximal MHC class II promoter, to elements of the transcription machinery, or both PubMed:8402893, PubMed:7749984,. Alternatively it may activate HLA class II transcription by modifying proteins that bind to the MHC class II promoter. Also mediates enhanced MHC class I transcription; the promoter element requirements for CIITA-mediated transcription are distinct from those of constitutive MHC class I transcription, and CIITA can functionally replace TAF1 at these genes. Activates CD74 transcription. Exhibits intrinsic GTP-stimulated acetyltransferase activity. Exhibits serine/threonine protein kinase activity: can phosphorylate the TFIID component TAF7, the RAP74 subunit of the general transcription factor TFIIF, histone H2B at 'Ser-37' and other histones (in vitro). Has antiviral activity against Ebola virus and coronaviruses, including SARS-CoV-2. Induces resistance by up-regulation of the p41 isoform of CD74, which blocks cathepsin-mediated cleavage of viral glycoproteins, thereby preventing viral fusion. Exhibits dominant-negative suppression of MHC class II gene expression. The polypeptide is MHC class II transactivator (Homo sapiens (Human)).